Reading from the N-terminus, the 714-residue chain is Polyribonucleotide nucleotidyltransferase (714 aa).

Residues aspartate 486 and aspartate 492 each coordinate Mg(2+). The KH domain maps to 553–612 (PRIITMKINPEKIRDVIGKGGAVIRALTEETGTTIDIEEDGTIKIGCTSAEAGEEAKKRI). The S1 motif domain occupies 622–690 (GQVYDGTVLK…DKGRVRLSAK (69 aa)).

Belongs to the polyribonucleotide nucleotidyltransferase family. Mg(2+) serves as cofactor.

Its subcellular location is the cytoplasm. The catalysed reaction is RNA(n+1) + phosphate = RNA(n) + a ribonucleoside 5'-diphosphate. Its function is as follows. Involved in mRNA degradation. Catalyzes the phosphorolysis of single-stranded polyribonucleotides processively in the 3'- to 5'-direction. In Methylobacillus flagellatus (strain ATCC 51484 / DSM 6875 / VKM B-1610 / KT), this protein is Polyribonucleotide nucleotidyltransferase.